The sequence spans 594 residues: Spindle pole body-associated protein CIK1 (594 aa).

Residues 1–29 (MNNSKIPKLSFHSDPNNVTRDFPKTKRQK) form a disordered region. Residues 81–360 (IERVKNNERK…VNELEKVQQE (280 aa)) adopt a coiled-coil conformation.

In terms of assembly, interacts with KAR3; the interaction is direct.

The protein resides in the nucleus. The protein localises to the cytoplasm. It is found in the cytoskeleton. It localises to the microtubule organizing center. Its subcellular location is the spindle pole body. The protein resides in the spindle. Its function is as follows. Together with the minus end-directed microtubule motor KAR3, involved in spindle midzone assembly, karyogamy (nuclear fusion) during mating, and with an essential function in meiosis I. To contribute to spindle midzone assembly during mitotic metaphase, the KAR3-CIK1 motor cross-links anti-parallel microtubules to align them on the spindle axis; as the motor travels polewards splayed microtubules are pulled into alignment. During the karyogamy (nuclear fusion) step of mating, KAR3-CIK1 cross-links antiparallel cytoplasmic microtubules emanating from the spindle pole bodies of mating partners; the motor activity of KAR3 creates the force that pulls the nuclei together by sliding cross-linked microtubules past one another. KAR3-CIK1 promotes microtubule shortening predominantly from the microtubule plus-end. Required for interhomolog recombination, synapsis of homologous chromosomes and establishment of a meiosis I spindle. The sequence is that of Spindle pole body-associated protein CIK1 (CIK1) from Saccharomyces cerevisiae (strain ATCC 204508 / S288c) (Baker's yeast).